The primary structure comprises 443 residues: Trigger factor (443 aa).

Residues 161-246 form the PPIase FKBP-type domain; sequence GDKVVIDFQG…IKKIMEGKLP (86 aa).

This sequence belongs to the FKBP-type PPIase family. Tig subfamily.

It is found in the cytoplasm. It carries out the reaction [protein]-peptidylproline (omega=180) = [protein]-peptidylproline (omega=0). In terms of biological role, involved in protein export. Acts as a chaperone by maintaining the newly synthesized protein in an open conformation. Functions as a peptidyl-prolyl cis-trans isomerase. The chain is Trigger factor from Legionella pneumophila subsp. pneumophila (strain Philadelphia 1 / ATCC 33152 / DSM 7513).